The chain runs to 514 residues: MYSVLVQETPMALLQLLKEHSSLFAFSLLILLLKFIYKDKSRKRRVKLPPSPPKLPVIGNLHQLGNKPHLSLRCLAEKYGPIIYLQLGEIPTVVVSSARLAKEVLKTHDLALSSRPQIFSAKHLFYNCTDVVFSPYGAYWRHIRKICILELLSAKRVQSFSHVREEEVARLVRRVAEFYPGTTNLTKMLGLYANDVLCRVAFGRGFSEGGDYDRHGFQKMLEEYQELLGGFSIGDFFPSMEFIHSLTGMKSRLQETFRRFDELFDQMVTDHLSPKREKEEHKDLVDVLLDIQKKESTEMPLTMDNVKAIILDMFAAGTDTTFITLDWGMTELLMNRKVLERAQAEVRGVVGERRVVLESDLPQLDYMKAVIKEIFRLHPPAPVLVPRESMEDVTIDGYDILAKTRIFVNAWAIGRDPESWEDPEAFEPERFIGSTIDFKGQDFELIPFGAGRRGCPAVTFGTATIELALAQLLHTFDWELPLDTAAKDLDMTEVFGITMHRIANLIVVARPRFP.

A helical membrane pass occupies residues 20–37 (HSSLFAFSLLILLLKFIY). 2 N-linked (GlcNAc...) asparagine glycosylation sites follow: asparagine 127 and asparagine 184. Cysteine 455 is a heme binding site.

Belongs to the cytochrome P450 family. Heme serves as cofactor. In terms of tissue distribution, expressed in fruit kernel, seedlings, leaves and stems.

It is found in the membrane. The chain is Cytochrome P450 71AP13 from Prunus mume (Japanese apricot).